Here is a 177-residue protein sequence, read N- to C-terminus: von Ebner gland protein 1 (177 aa).

The first 18 residues, 1-18 (MKALLLTFGLSLLAALQA), serve as a signal peptide directing secretion. C80 and C172 are joined by a disulfide.

Belongs to the calycin superfamily. Lipocalin family. As to quaternary structure, homodimer.

It localises to the secreted. In terms of biological role, could play a role in taste reception. Could be necessary for the concentration and delivery of sapid molecules in the gustatory system. The sequence is that of von Ebner gland protein 1 (Vegp1) from Rattus norvegicus (Rat).